The sequence spans 190 residues: MGLLDAKISNHNVLVTSVDNVLNWARLSSLWPMGFGLACCAIEMMATNASNYDLERFGIFPRSSPRQSDLMIVAGTVTMKMAERVIRLYEQMPEPRYVLSMGSCSNCGGPYWKHGYHVLKGVDRIIPVDVYVPGCPPRPEALIGGLMKVQELIRMEQIGISRAEALKKLEEKSFDPGIVLEHQRKSQAVS.

[4Fe-4S] cluster-binding residues include C39, C40, C104, and C135.

This sequence belongs to the complex I 20 kDa subunit family. In terms of assembly, NDH-1 is composed of 14 different subunits. Subunits NuoB, C, D, E, F, and G constitute the peripheral sector of the complex. [4Fe-4S] cluster serves as cofactor.

Its subcellular location is the cell inner membrane. The enzyme catalyses a quinone + NADH + 5 H(+)(in) = a quinol + NAD(+) + 4 H(+)(out). In terms of biological role, NDH-1 shuttles electrons from NADH, via FMN and iron-sulfur (Fe-S) centers, to quinones in the respiratory chain. The immediate electron acceptor for the enzyme in this species is believed to be a menaquinone. Couples the redox reaction to proton translocation (for every two electrons transferred, four hydrogen ions are translocated across the cytoplasmic membrane), and thus conserves the redox energy in a proton gradient. This Prosthecochloris aestuarii (strain DSM 271 / SK 413) protein is NADH-quinone oxidoreductase subunit B.